A 278-amino-acid polypeptide reads, in one-letter code: 2-heptyl-3-hydroxy-4-quinolone dioxygenase AqdC1 (278 aa).

Residues 29-158 form the AB hydrolase-1 domain; the sequence is PTIVMLPGWC…GWVDSCRALF (130 aa). Histidine 103 lines the substrate pocket. Catalysis depends on histidine 250, which acts as the Proton donor/acceptor.

It belongs to the AB hydrolase superfamily.

The enzyme catalyses 2-heptyl-3-hydroxy-4(1H)-quinolone + O2 = N-octanoylanthranilate + CO + H(+). Involved in the degradation of the Pseudomonas aeruginosa quorum sensing signal molecules HHQ (2-heptyl-4-quinolone) and PQS (2-heptyl-3-hydroxy-4-quinolone) to anthranilic acid. Catalyzes the cleavage of PQS to form N-octanoylanthranilic acid and carbon monoxide. In Rhodococcus erythropolis (Arthrobacter picolinophilus), this protein is 2-heptyl-3-hydroxy-4-quinolone dioxygenase AqdC1.